The following is a 58-amino-acid chain: Small ribosomal subunit protein bS21 (58 aa).

Belongs to the bacterial ribosomal protein bS21 family.

This chain is Small ribosomal subunit protein bS21, found in Streptococcus pyogenes serotype M49 (strain NZ131).